A 447-amino-acid chain; its full sequence is Tubulin alpha-1 chain (447 aa).

8 residues coordinate GTP: Q11, E72, S141, G145, T146, T180, N207, and N229. E72 contacts Mg(2+). The active site involves E255.

The protein belongs to the tubulin family. As to quaternary structure, dimer of alpha and beta chains. A typical microtubule is a hollow water-filled tube with an outer diameter of 25 nm and an inner diameter of 15 nM. Alpha-beta heterodimers associate head-to-tail to form protofilaments running lengthwise along the microtubule wall with the beta-tubulin subunit facing the microtubule plus end conferring a structural polarity. Microtubules usually have 13 protofilaments but different protofilament numbers can be found in some organisms and specialized cells. It depends on Mg(2+) as a cofactor.

The protein resides in the cytoplasm. It localises to the cytoskeleton. It catalyses the reaction GTP + H2O = GDP + phosphate + H(+). Its function is as follows. Tubulin is the major constituent of microtubules, a cylinder consisting of laterally associated linear protofilaments composed of alpha- and beta-tubulin heterodimers. Microtubules grow by the addition of GTP-tubulin dimers to the microtubule end, where a stabilizing cap forms. Below the cap, tubulin dimers are in GDP-bound state, owing to GTPase activity of alpha-tubulin. In Saccharomyces cerevisiae (strain ATCC 204508 / S288c) (Baker's yeast), this protein is Tubulin alpha-1 chain (TUB1).